A 431-amino-acid chain; its full sequence is Serine/threonine-protein kinase Sgk1 (431 aa).

Residues 1 to 60 (MTVKTEAARGPLTYSRMRGMVAILIAFMKQRRMGLNDFIQKIANNSYACKHTEVQSILKI) are necessary for localization to the mitochondria. A disordered region spans residues 66–92 (PELMNANPSPPPSPSQQINLGPSSNPH). Ser-74 carries the phosphoserine modification. Position 78 is a phosphoserine; by MAPK7 (Ser-78). The span at 81 to 91 (QQINLGPSSNP) shows a compositional bias: polar residues. The 258-residue stretch at 98-355 (FHFLKVIGKG…FMEIRNHVFF (258 aa)) folds into the Protein kinase domain. ATP contacts are provided by residues 104-112 (IGKGSFGKV) and Lys-127. Residues 131–141 (KKAILKKKEEK) carry the Nuclear localization signal motif. Asp-222 (proton acceptor) is an active-site residue. Thr-256 carries the phosphothreonine; by PDPK1 modification. Residues 356–431 (SLINWDDLIN…SYAPPMDSFL (76 aa)) form the AGC-kinase C-terminal domain. Thr-369 carries the post-translational modification Phosphothreonine; by PKA. Residues Ser-397, Ser-401, and Ser-422 each carry the phosphoserine modification.

This sequence belongs to the protein kinase superfamily. AGC Ser/Thr protein kinase family. In terms of assembly, homodimer; disulfide-linked. Forms a trimeric complex with FBXW7 and NOTCH1. Interacts with MAPK3/ERK1, MAPK1/ERK2, MAP2K1/MEK1, MAP2K2/MEK2, NEDD4, NEDD4L, MAPT/TAU, MAPK7, CREB1, SLC9A3R2/NHERF2 and KCNJ1/ROMK1. Associates with the mammalian target of rapamycin complex 2 (mTORC2) via an interaction with MAPKAP1/SIN1. Post-translationally, regulated by phosphorylation. Activated by phosphorylation on Ser-422 by mTORC2, transforming it into a substrate for PDPK1 which phosphorylates it on Thr-256. Phosphorylation on Ser-397 and Ser-401 are also essential for its activity. Phosphorylation on Ser-78 by MAPK7 is required for growth factor-induced cell cycle progression. In terms of processing, ubiquitinated by NEDD4L; which promotes proteasomal degradation. Ubiquitinated by SYVN1 at the endoplasmic reticulum; which promotes rapid proteasomal degradation and maintains a high turnover rate in resting cells.

The protein localises to the cytoplasm. It is found in the nucleus. The protein resides in the endoplasmic reticulum membrane. Its subcellular location is the cell membrane. It localises to the mitochondrion. It catalyses the reaction L-seryl-[protein] + ATP = O-phospho-L-seryl-[protein] + ADP + H(+). The catalysed reaction is L-threonyl-[protein] + ATP = O-phospho-L-threonyl-[protein] + ADP + H(+). Two specific sites, one in the kinase domain (Thr-256) and the other in the C-terminal regulatory region (Ser-422), need to be phosphorylated for its full activation. Phosphorylation at Ser-397 and Ser-401 are also essential for its activity. Activated by WNK1, WNK2, WNK3 and WNK4; which promote phosphorylation by mTORC2. Its function is as follows. Serine/threonine-protein kinase which is involved in the regulation of a wide variety of ion channels, membrane transporters, cellular enzymes, transcription factors, neuronal excitability, cell growth, proliferation, survival, migration and apoptosis. Plays an important role in cellular stress response. Contributes to regulation of renal Na(+) retention, renal K(+) elimination, salt appetite, gastric acid secretion, intestinal Na(+)/H(+) exchange and nutrient transport, insulin-dependent salt sensitivity of blood pressure, salt sensitivity of peripheral glucose uptake, cardiac repolarization and memory consolidation. Up-regulates Na(+) channels: SCNN1A/ENAC, SCN5A and ASIC1/ACCN2, K(+) channels: KCNJ1/ROMK1, KCNA1-5, KCNQ1-5 and KCNE1, epithelial Ca(2+) channels: TRPV5 and TRPV6, chloride channels: BSND, CLCN2 and CFTR, glutamate transporters: SLC1A3/EAAT1, SLC1A2 /EAAT2, SLC1A1/EAAT3, SLC1A6/EAAT4 and SLC1A7/EAAT5, amino acid transporters: SLC1A5/ASCT2, SLC38A1/SN1 and SLC6A19, creatine transporter: SLC6A8, Na(+)/dicarboxylate cotransporter: SLC13A2/NADC1, Na(+)-dependent phosphate cotransporter: SLC34A2/NAPI-2B, glutamate receptor: GRIK2/GLUR6. Up-regulates carriers: SLC9A3/NHE3, SLC12A1/NKCC2, SLC12A3/NCC, SLC5A3/SMIT, SLC2A1/GLUT1, SLC5A1/SGLT1 and SLC15A2/PEPT2. Regulates enzymes: GSK3A/B, PMM2 and Na(+)/K(+) ATPase, and transcription factors: CTNNB1 and nuclear factor NF-kappa-B. Stimulates sodium transport into epithelial cells by enhancing the stability and expression of SCNN1A/ENAC. This is achieved by phosphorylating the NEDD4L ubiquitin E3 ligase, promoting its interaction with 14-3-3 proteins, thereby preventing it from binding to SCNN1A/ENAC and targeting it for degradation. Regulates store-operated Ca(+2) entry (SOCE) by stimulating ORAI1 and STIM1. Regulates KCNJ1/ROMK1 directly via its phosphorylation or indirectly via increased interaction with SLC9A3R2/NHERF2. Phosphorylates MDM2 and activates MDM2-dependent ubiquitination of p53/TP53. Phosphorylates MAPT/TAU and mediates microtubule depolymerization and neurite formation in hippocampal neurons. Phosphorylates SLC2A4/GLUT4 and up-regulates its activity. Phosphorylates APBB1/FE65 and promotes its localization to the nucleus. Phosphorylates MAPK1/ERK2 and activates it by enhancing its interaction with MAP2K1/MEK1 and MAP2K2/MEK2. Phosphorylates FBXW7 and plays an inhibitory role in the NOTCH1 signaling. Phosphorylates FOXO1 resulting in its relocalization from the nucleus to the cytoplasm. Phosphorylates FOXO3, promoting its exit from the nucleus and interference with FOXO3-dependent transcription. Phosphorylates BRAF and MAP3K3/MEKK3 and inhibits their activity. Phosphorylates SLC9A3/NHE3 in response to dexamethasone, resulting in its activation and increased localization at the cell membrane. Phosphorylates CREB1. Necessary for vascular remodeling during angiogenesis. This is Serine/threonine-protein kinase Sgk1 (SGK1) from Oryctolagus cuniculus (Rabbit).